A 384-amino-acid polypeptide reads, in one-letter code: Organic solute transporter alpha-like protein 1 (384 aa).

Residues 1 to 38 (MEIVKTIIPHNRSYIEPPIPSATEWLANMSVMHVSCLT) lie on the Extracellular side of the membrane. N-linked (GlcNAc...) asparagine glycosylation is found at asparagine 11 and asparagine 28. A helical transmembrane segment spans residues 39-59 (IACVFVAITFLSSFFHLFFVL). At 60–70 (KYVSNERIRND) the chain is on the cytoplasmic side. A helical transmembrane segment spans residues 71-91 (MYALIFMFPITTFASLVGMFI). Residues 92–93 (PR) are Extracellular-facing. Residues 94-114 (AAIFLYAVSLVYFMFTLFIMV) form a helical membrane-spanning segment. At 115–165 (TLLFNIFGGRQEMSAYLLQRNIRVNFTVPPLCFFKFLPTVESTDQNLRRIE) the chain is on the cytoplasmic side. A helical membrane pass occupies residues 166–186 (WLVFQTPIIRTLLELVSVVVS). The Extracellular portion of the chain corresponds to 187–202 (MEQEGRRESVWFVFSQ). The helical transmembrane segment at 203–223 (LMALLSMCIAFYGCYVMVPLG) threads the bilayer. The Cytoplasmic portion of the chain corresponds to 224–240 (REKHAPYRFDFLFRTCD). Residues 241 to 261 (IAQCIYTIQKFVFEFAAAVGL) form a helical membrane-spanning segment. The Extracellular segment spans residues 262–273 (ITSDRYLPAAAK). A helical membrane pass occupies residues 274-294 (ALWWASFMCTWEMMLLSALCS). At 295–384 (YCLRPAKCKF…FDSLSQIQGQ (90 aa)) the chain is on the cytoplasmic side.

Belongs to the OST-alpha family.

Its subcellular location is the cell membrane. In terms of biological role, probable transporter. This is Organic solute transporter alpha-like protein 1 (osta-1) from Caenorhabditis elegans.